The sequence spans 489 residues: Glycogen synthase (489 aa).

Residue Lys17 coordinates ADP-alpha-D-glucose.

This sequence belongs to the glycosyltransferase 1 family. Bacterial/plant glycogen synthase subfamily.

It carries out the reaction [(1-&gt;4)-alpha-D-glucosyl](n) + ADP-alpha-D-glucose = [(1-&gt;4)-alpha-D-glucosyl](n+1) + ADP + H(+). It participates in glycan biosynthesis; glycogen biosynthesis. Its function is as follows. Synthesizes alpha-1,4-glucan chains using ADP-glucose. This is Glycogen synthase from Nitratidesulfovibrio vulgaris (strain ATCC 29579 / DSM 644 / CCUG 34227 / NCIMB 8303 / VKM B-1760 / Hildenborough) (Desulfovibrio vulgaris).